A 166-amino-acid polypeptide reads, in one-letter code: Phospholipase A2 inhibitor B1 (166 aa).

Positions 1–19 (MRLILLSGLLLLGTFLVNG) are cleaved as a signal peptide. The 116-residue stretch at 46-161 (LFHAFLTVHK…CDDNLLVVCE (116 aa)) folds into the C-type lectin domain. Cystine bridges form between C83–C160 and C138–C152. N122 carries N-linked (GlcNAc...) asparagine glycosylation.

The protein belongs to the alpha-type phospholipase A2 inhibitor family. Homotrimer; non-covalently linked. In terms of tissue distribution, expressed by the liver.

Its subcellular location is the secreted. In terms of biological role, this phospholipase A2 inhibitor binds directly phospholipase A2 in the presence or absence of calcium. This chain is Phospholipase A2 inhibitor B1, found in Crotalus durissus terrificus (South American rattlesnake).